Reading from the N-terminus, the 137-residue chain is uncharacterized protein (137 aa).

The next 5 helical transmembrane spans lie at 4-26 (AIILGLLVAVFYGVGTFFAKIVC), 35-57 (IVVNIVGIILCLIILLKYKNIII), 62-84 (ILTYAIISAVLVVIGSLLLYYAL), 89-111 (ASIVVPLSSIGPAITVALSILFL), and 116-135 (TLPQMIGIVLIIIGIILLSI). One can recognise an EamA domain in the interval 13–135 (VFYGVGTFFA…IIIGIILLSI (123 aa)).

It localises to the cell membrane. This is an uncharacterized protein from Methanocaldococcus jannaschii (strain ATCC 43067 / DSM 2661 / JAL-1 / JCM 10045 / NBRC 100440) (Methanococcus jannaschii).